The primary structure comprises 357 residues: Transcription factor unc-86 (357 aa).

The short motif at 35–44 (RAAQVALADI) is the POU-IV box element. The 78-residue stretch at 155–232 (DMDTDPRQLE…ILHSWLEKAE (78 aa)) folds into the POU-specific domain. A DNA-binding region (homeobox) is located at residues 253–312 (KKRKRTSIAAPEKRELEQFFKQQPRPSGERIASIADRLDLKKNVVRVWFCNQRQKQKRDF).

It belongs to the POU transcription factor family. Class-4 subfamily. As to quaternary structure, interacts with mec-3; the heterooligomer binds to the promoters of mec-3, mec-4 and mec-7. Specific to neurons and neuroblasts. Expressed in CEM head neurons and in IL2, URA, URB, URX and URY neurons. Not expressed in olfactory sensory neurons but expressed in AIZ interneurons.

The protein localises to the nucleus. In terms of biological role, transcription factor required for correct cell fate determination and differentiation in diverse neuronal cell lineages where it plays a role in specifying the fate of daughter cells during cell divisions. Involved in sensory neuron production and function. Binds both alone and with mec-3 to the mec-3 promoter to initiate and maintain mec-3 expression which is required for sensory neuron differentiation. In addition, binds both alone and with mec-3 to the promoters of mec-4 and mec-7 which act to regulate sensory neuron function. Involved in determining the identity of the serotonergic NSM neurons and the cholinergic IL2 sensory and URA motor neurons. Promotes expression of the cfi-1 transcription factor in the URA and IL2 neurons which in turn activates normal URA and IL2 gene expression. Required to determine the identity of BDU sensory neurons in concert with transcription factor unc-86, regulating expression of a number of genes, including transcription factors ceh-14 and ahr-1, neuropeptides flp-10, nlp-1 and nlp-15, and tyramine receptor-encoding ser-2. Regulates expression of a number of genes in NSM neurons including bas-1, cat-1, dop-3, mgl-3, nlp-13, scd-2 and ptps-1. In the IL2 neurons, required for expression of cho-1, gcy-19, klp-6, lag-2, unc-5 and unc-17. Promotes expression of pkd-2 in the male-specific CEM head neurons. Required for dauer-specific branching of IL2Q neurons and nictation behavior. Controls both the timing and direction of axon outgrowth in HSN neurons. Plays a role in serotonin production by regulating expression of the tryptophan hydrolase tph-1 which catalyzes serotonin synthesis, in the AIM, NSM, HSN and RIH neurons. Involved in regulation of lin-11 expression in the AIZ interneurons, the major interneurons of the olfactory pathway, and is required for odortaxis behavior. Involved in neurite pruning between AIM neurons during larval development by regulating the expression of transcription factor mbr-1. Required for correct localization of unc-40. The protein is Transcription factor unc-86 (unc-86) of Caenorhabditis elegans.